Consider the following 137-residue polypeptide: MLVPKRVKHRREFRGKMRGYAKGGDTISFGEYGLQATTSHWITNRQIEAARIAMTRYMKRNGQVWIKIFPHKSYTAKAIGVRMGSGKGAPEGWVAPVKRGVVMFELGGVDEATAREALRLASHKLPVKTKFVKRGEA.

This sequence belongs to the universal ribosomal protein uL16 family. In terms of assembly, part of the 50S ribosomal subunit.

Functionally, binds 23S rRNA and is also seen to make contacts with the A and possibly P site tRNAs. This chain is Large ribosomal subunit protein uL16, found in Lactococcus lactis subsp. lactis (strain IL1403) (Streptococcus lactis).